Reading from the N-terminus, the 272-residue chain is Magnetosome protein MamQ (272 aa).

Over 1–46 (MAVSDADASSVDKVESITLQRVKQSEELLAQLYVVEESPRRMGRGP) the chain is Cytoplasmic. The chain crosses the membrane as a helical span at residues 47 to 67 (VQLMLAISVLSLVAFITTLLM). Residues 68–272 (RYNAFVTMYE…PLTHSQESKN (205 aa)) are Lumenal-facing.

This sequence belongs to the LemA family.

The protein localises to the magnetosome membrane. Its subcellular location is the cell inner membrane. Essential for magnetosome formation. Not essential for formation of magnetosome membrane vesicles. One of 7 genes (mamLQBIEMO) able to induce magnetosome membrane biogenesis; coexpression of mamLQRBIEMO in a deletion of the 17 gene mamAB operon restores magnetosome vesicle formation but not magnetite biosynthesis. This is Magnetosome protein MamQ from Magnetospirillum gryphiswaldense (strain DSM 6361 / JCM 21280 / NBRC 15271 / MSR-1).